Reading from the N-terminus, the 808-residue chain is MPDVHLSSSFAEGNTSEQNENDTFLSRIFGFHSIYNQLDNYQYYDPESQVGDSMIRRDGGSNHLLDSESDSDLSSIESSSSSQDQPPSIHANDIQMQPYEPPTQPYGEIDPQPQNAPIMTESAPSHGILNNGAVSTDEAQVQFRKTKTLPSFHTMYQRQARGRVFIPSRERALYLWANIVNMDEFLSDLYYYYRGRGVMNIVLGRIVDLATLVFVIGFASFLAWGVDYDKFLSRGQKSLTLSDLIIPHYISKAPAMAKLLLFGFAIYITLRIVQLYFDFRYKLSEIRNFYRQLLDIPHDDELMTISWATIVERLMELKDFNTLTSSSHYVNDLKSKVRLNAHDIANRIMRKENYIIALINKDTLNLGFEIPLLSVLNPILNTRAVLTRTLEWNLKLCIYNFVFNNQGQVNPNVLKDYNRNMLAKELSSRFKMAAIINLLLCPFIVVYFVLLYFFRYFNEYKTNPSSLIGLRQYTPWAEWKLREFNELPHFFVKRLQLSIGPANTYINQFPRGFLVVNIMTLVNFVAGAITAVLVVMGLWFEDEEHSFWAFELTENKSALFYISIFGTIWAVTAGSLATDTSSTESANSSSPFYYDPEASLRYVTQFTHYMPSTWSKKLHTAEVKGEFCELFSLKIVVIINELLSLVLTPFILWFKLSSQSGAIIDFVREYSVYVDGLGYVCYFAMFNFEKKDKNMMHDLNKKKKKSPSHRTKRDDIEEEEESDNGVPNGDDKMIKSYMYFLESYDDRERAARPTPKSRQLPRTRLPPGSISESTYNVDHILEEEELPQGKSAGVFGMINQFYKQDLGR.

Topologically, residues 1–205 (MPDVHLSSSF…RGVMNIVLGR (205 aa)) are cytoplasmic. The segment at 51-116 (GDSMIRRDGG…GEIDPQPQNA (66 aa)) is disordered. The segment covering 72–89 (DLSSIESSSSSQDQPPSI) has biased composition (low complexity). The chain crosses the membrane as a helical span at residues 206 to 226 (IVDLATLVFVIGFASFLAWGV). Topologically, residues 227-258 (DYDKFLSRGQKSLTLSDLIIPHYISKAPAMAK) are lumenal. The helical transmembrane segment at 259 to 279 (LLLFGFAIYITLRIVQLYFDF) threads the bilayer. The Cytoplasmic portion of the chain corresponds to 280–433 (RYKLSEIRNF…KELSSRFKMA (154 aa)). Residues 434–454 (AIINLLLCPFIVVYFVLLYFF) lie within the membrane without spanning it. Topologically, residues 455–517 (RYFNEYKTNP…QFPRGFLVVN (63 aa)) are cytoplasmic. The helical transmembrane segment at 518–538 (IMTLVNFVAGAITAVLVVMGL) threads the bilayer. Residues 539–557 (WFEDEEHSFWAFELTENKS) lie on the Lumenal side of the membrane. The helical transmembrane segment at 558 to 578 (ALFYISIFGTIWAVTAGSLAT) threads the bilayer. Residues 579–633 (DTSSTESANSSSPFYYDPEASLRYVTQFTHYMPSTWSKKLHTAEVKGEFCELFSL) are Cytoplasmic-facing. An intramembrane segment occupies 634 to 654 (KIVVIINELLSLVLTPFILWF). At 655–808 (KLSSQSGAII…NQFYKQDLGR (154 aa)) the chain is on the cytoplasmic side. Disordered stretches follow at residues 698–732 (DLNK…GDDK) and 748–771 (ERAA…GSIS). The span at 700-711 (NKKKKKSPSHRT) shows a compositional bias: basic residues.

It belongs to the ATG9 family. As to quaternary structure, homotrimer; forms a homotrimer with a central pore that forms a path between the two membrane leaflets. In terms of processing, phosphorylated by ATG1. ATG1 phosphorylation is required for preautophagosome elongation.

It is found in the preautophagosomal structure membrane. The protein localises to the cytoplasmic vesicle membrane. The protein resides in the golgi apparatus membrane. It localises to the endoplasmic reticulum membrane. It carries out the reaction a 1,2-diacyl-sn-glycero-3-phosphocholine(in) = a 1,2-diacyl-sn-glycero-3-phosphocholine(out). The enzyme catalyses a 1,2-diacyl-sn-glycero-3-phospho-L-serine(in) = a 1,2-diacyl-sn-glycero-3-phospho-L-serine(out). It catalyses the reaction a 1,2-diacyl-sn-glycero-3-phosphoethanolamine(in) = a 1,2-diacyl-sn-glycero-3-phosphoethanolamine(out). The catalysed reaction is a 1,2-diacyl-sn-glycero-3-phospho-(1D-myo-inositol-3-phosphate)(in) = a 1,2-diacyl-sn-glycero-3-phospho-(1D-myo-inositol-3-phosphate)(out). In terms of biological role, phospholipid scramblase involved in autophagy and cytoplasm to vacuole transport (Cvt) vesicle formation. Cycles between the preautophagosomal structure/phagophore assembly site (PAS) and the cytoplasmic vesicle pool and supplies membrane for the growing autophagosome. Lipid scramblase activity plays a key role in preautophagosomal structure/phagophore assembly by distributing the phospholipids that arrive through ATG2 from the cytoplasmic to the luminal leaflet of the bilayer, thereby driving autophagosomal membrane expansion. Required for mitophagy. Also involved in endoplasmic reticulum-specific autophagic process and is essential for the survival of cells subjected to severe ER stress. Different machineries are required for anterograde trafficking to the PAS during either the Cvt pathway or bulk autophagy and for retrograde trafficking. This Meyerozyma guilliermondii (strain ATCC 6260 / CBS 566 / DSM 6381 / JCM 1539 / NBRC 10279 / NRRL Y-324) (Yeast) protein is Autophagy-related protein 9 (ATG9).